The primary structure comprises 97 residues: Protein E7 (97 aa).

Residues 1–40 (MIGKQATLRDIVLEELVQPIDLHCHEELTEEVEEAVVEEE) are E7 terminal domain. An LXCXE motif; interaction with host RB1 and TMEM173/STING motif is present at residues 22–26 (LHCHE). A zinc finger lies at 52–88 (CGGCETQLKLYVLATDFGIRSFQASLLENVKLVCPAC). The Nuclear export signal signature appears at 70–78 (IRSFQASLL).

Belongs to the papillomaviridae E7 protein family. As to quaternary structure, homodimer. Homooligomer. Interacts with host RB1; this interaction induces dissociation of RB1-E2F1 complex thereby disrupting RB1 activity. Interacts with host EP300; this interaction represses EP300 transcriptional activity. Interacts with protein E2; this interaction inhibits E7 oncogenic activity. Interacts with host TMEM173/STING; this interaction impairs the ability of TMEM173/STING to sense cytosolic DNA and promote the production of type I interferon (IFN-alpha and IFN-beta). In terms of processing, highly phosphorylated.

The protein localises to the host cytoplasm. The protein resides in the host nucleus. Functionally, plays a role in viral genome replication by driving entry of quiescent cells into the cell cycle. Stimulation of progression from G1 to S phase allows the virus to efficiently use the cellular DNA replicating machinery to achieve viral genome replication. E7 protein has both transforming and trans-activating activities. Induces the disassembly of the E2F1 transcription factor from RB1, with subsequent transcriptional activation of E2F1-regulated S-phase genes. Interferes with host histone deacetylation mediated by HDAC1 and HDAC2, leading to transcription activation. Also plays a role in the inhibition of both antiviral and antiproliferative functions of host interferon alpha. Interaction with host TMEM173/STING impairs the ability of TMEM173/STING to sense cytosolic DNA and promote the production of type I interferon (IFN-alpha and IFN-beta). The chain is Protein E7 from Human papillomavirus 23.